The sequence spans 145 residues: Cytochrome b (145 aa).

A helical membrane pass occupies residues 38–58 (FFALHFLLPFVLAALVIMHLI). Heme b is bound by residues H42 and H56. An a ubiquinone-binding site is contributed by H61. Residues 85–105 (FVFKDLVTVFIFFIVLSVFVF) form a helical membrane-spanning segment.

It belongs to the cytochrome b family. As to quaternary structure, fungal cytochrome b-c1 complex contains 10 subunits; 3 respiratory subunits, 2 core proteins and 5 low-molecular weight proteins. Cytochrome b-c1 complex is a homodimer. Heme b serves as cofactor.

It is found in the mitochondrion inner membrane. Functionally, component of the ubiquinol-cytochrome c reductase complex (complex III or cytochrome b-c1 complex) that is part of the mitochondrial respiratory chain. The b-c1 complex mediates electron transfer from ubiquinol to cytochrome c. Contributes to the generation of a proton gradient across the mitochondrial membrane that is then used for ATP synthesis. The protein is Cytochrome b (cob) of Aspergillus fumigatus (Neosartorya fumigata).